The primary structure comprises 155 residues: Altered inheritance rate of mitochondria protein 29 (155 aa).

Ser-78 bears the Phosphoserine mark.

This sequence belongs to the UPF0538 family.

It localises to the cytoplasm. May be involved in mitochondrial organization and biogenesis. This is Altered inheritance rate of mitochondria protein 29 (AIM29) from Saccharomyces cerevisiae (strain ATCC 204508 / S288c) (Baker's yeast).